Here is a 112-residue protein sequence, read N- to C-terminus: DNA-directed RNA polymerases I and III subunit RPAC2 (112 aa).

The protein belongs to the archaeal Rpo11/eukaryotic RPB11/RPC19 RNA polymerase subunit family. In terms of assembly, component of the RNA polymerase I (Pol I) and RNA polymerase III (Pol III) complexes consisting of at least 13 and 17 subunits, respectively.

It is found in the nucleus. DNA-dependent RNA polymerase catalyzes the transcription of DNA into RNA using the four ribonucleoside triphosphates as substrates. Common core component of RNA polymerases I and III which synthesize ribosomal RNA precursors and small RNAs, such as 5S rRNA and tRNAs, respectively. The protein is DNA-directed RNA polymerases I and III subunit RPAC2 (polr1d) of Danio rerio (Zebrafish).